We begin with the raw amino-acid sequence, 388 residues long: GTPase Obg (388 aa).

Positions 1-159 (MKFVDEANIR…RSIKLELLLL (159 aa)) constitute an Obg domain. The OBG-type G domain occupies 160-333 (ADVGLLGMPN…LSIKMLDYIR (174 aa)). GTP-binding positions include 166-173 (GMPNAGKS), 191-195 (FTTLV), 213-216 (DIPG), 283-286 (NKTD), and 314-316 (SAY). The Mg(2+) site is built by Ser-173 and Thr-193.

It belongs to the TRAFAC class OBG-HflX-like GTPase superfamily. OBG GTPase family. As to quaternary structure, monomer. Mg(2+) is required as a cofactor.

Its subcellular location is the cytoplasm. Its function is as follows. An essential GTPase which binds GTP, GDP and possibly (p)ppGpp with moderate affinity, with high nucleotide exchange rates and a fairly low GTP hydrolysis rate. Plays a role in control of the cell cycle, stress response, ribosome biogenesis and in those bacteria that undergo differentiation, in morphogenesis control. This is GTPase Obg from Shewanella frigidimarina (strain NCIMB 400).